The chain runs to 298 residues: Tyrosine recombinase XerC (298 aa).

In terms of domain architecture, Core-binding (CB) spans 2–88 (TDLHTDVERY…ALRSFFDWLV (87 aa)). The Tyr recombinase domain maps to 109 to 288 (HLPKNIDVDD…DFQHLASVYD (180 aa)). Catalysis depends on residues R148, K172, H240, R243, and H266. Y275 acts as the O-(3'-phospho-DNA)-tyrosine intermediate in catalysis.

It belongs to the 'phage' integrase family. XerC subfamily. In terms of assembly, forms a cyclic heterotetrameric complex composed of two molecules of XerC and two molecules of XerD, in which XerC interacts with XerD via its C-terminal region, XerD interacts with XerC via its C-terminal region and so on.

It is found in the cytoplasm. With respect to regulation, ftsK may regulate the catalytic switch between XerC and XerD in the heterotetrameric complex during the two steps of the recombination process. Its function is as follows. Site-specific tyrosine recombinase, which acts by catalyzing the cutting and rejoining of the recombining DNA molecules. Binds cooperatively to specific DNA consensus sequences that are separated from XerD binding sites by a short central region, forming the heterotetrameric XerC-XerD complex that recombines DNA substrates. The complex is essential to convert dimers of the bacterial chromosome into monomers to permit their segregation at cell division. It also contributes to the segregational stability of plasmids. In the complex XerC specifically exchanges the top DNA strands. This chain is Tyrosine recombinase XerC, found in Shigella flexneri serotype 5b (strain 8401).